Here is an 853-residue protein sequence, read N- to C-terminus: DNA mismatch repair protein MutS (853 aa).

An ATP-binding site is contributed by 614 to 621; sequence GPNMGGKS.

It belongs to the DNA mismatch repair MutS family.

Functionally, this protein is involved in the repair of mismatches in DNA. It is possible that it carries out the mismatch recognition step. This protein has a weak ATPase activity. The chain is DNA mismatch repair protein MutS from Escherichia coli O157:H7 (strain EC4115 / EHEC).